Consider the following 34-residue polypeptide: Photosystem II reaction center protein Psb30 (34 aa).

The chain crosses the membrane as a helical span at residues 5–25 (VLAQLTVLAFVIAVGPITLIW).

It belongs to the Psb30/Ycf12 family. As to quaternary structure, PSII is composed of 1 copy each of membrane proteins PsbA, PsbB, PsbC, PsbD, PsbE, PsbF, PsbH, PsbI, PsbJ, PsbK, PsbL, PsbM, PsbT, PsbX, PsbY, PsbZ, Psb30/Ycf12, peripheral proteins of the oxygen-evolving complex and a large number of cofactors. It forms dimeric complexes.

The protein resides in the plastid. Its subcellular location is the chloroplast thylakoid membrane. Functionally, a core subunit of photosystem II (PSII), probably helps stabilize the reaction center. This chain is Photosystem II reaction center protein Psb30, found in Cyanidioschyzon merolae (strain NIES-3377 / 10D) (Unicellular red alga).